Reading from the N-terminus, the 207-residue chain is Holliday junction branch migration complex subunit RuvA (207 aa).

Positions 1-65 (MIGRIRGVIL…EDAQLLYGFN (65 aa)) are domain I. The tract at residues 66 to 143 (QKQERALFRE…KGLNGDLFEQ (78 aa)) is domain II. The interval 144–158 (NGDIELPASASSKAP) is flexible linker. Residues 159–207 (SAADIEAEASAALIALGYKPQEAAKMISRVATAGADSETLIKEALRAAI) form a domain III region.

It belongs to the RuvA family. As to quaternary structure, homotetramer. Forms an RuvA(8)-RuvB(12)-Holliday junction (HJ) complex. HJ DNA is sandwiched between 2 RuvA tetramers; dsDNA enters through RuvA and exits via RuvB. An RuvB hexamer assembles on each DNA strand where it exits the tetramer. Each RuvB hexamer is contacted by two RuvA subunits (via domain III) on 2 adjacent RuvB subunits; this complex drives branch migration. In the full resolvosome a probable DNA-RuvA(4)-RuvB(12)-RuvC(2) complex forms which resolves the HJ.

The protein resides in the cytoplasm. The RuvA-RuvB-RuvC complex processes Holliday junction (HJ) DNA during genetic recombination and DNA repair, while the RuvA-RuvB complex plays an important role in the rescue of blocked DNA replication forks via replication fork reversal (RFR). RuvA specifically binds to HJ cruciform DNA, conferring on it an open structure. The RuvB hexamer acts as an ATP-dependent pump, pulling dsDNA into and through the RuvAB complex. HJ branch migration allows RuvC to scan DNA until it finds its consensus sequence, where it cleaves and resolves the cruciform DNA. This is Holliday junction branch migration complex subunit RuvA from Proteus mirabilis (strain HI4320).